The chain runs to 99 residues: Ribonuclease P protein component 1 (99 aa).

The protein belongs to the eukaryotic/archaeal RNase P protein component 1 family. In terms of assembly, consists of a catalytic RNA component and at least 4-5 protein subunits.

Its subcellular location is the cytoplasm. It catalyses the reaction Endonucleolytic cleavage of RNA, removing 5'-extranucleotides from tRNA precursor.. Functionally, part of ribonuclease P, a protein complex that generates mature tRNA molecules by cleaving their 5'-ends. The protein is Ribonuclease P protein component 1 of Methanococcus vannielii.